The chain runs to 448 residues: Protein chibby homolog 2 (448 aa).

Residues Ser41, Ser86, Ser89, Ser97, Ser124, Ser144, Ser148, and Ser150 each carry the phosphoserine modification. Residues 163–198 are a coiled coil; the sequence is AKEFVLQEENKSLREENKALREENRMLRKENKILQV. Positions 206–226 are disordered; that stretch reads SLGREESRPPSPLPQKDSASL. A phosphoserine mark is found at Ser212 and Ser225. Positions 242–267 form a coiled coil; it reads KEDSTLQLLREENRALQQLLEQKQAY. Positions 270–321 are disordered; the sequence is QTEDAAAPAEESKPAPSPHEEPCSPGLLQDQGSGLSSHFEEPRGPPAPQEDS. Residues 279 to 291 show a composition bias toward basic and acidic residues; sequence EESKPAPSPHEEP. Ser335 and Ser338 each carry phosphoserine. A coiled-coil region spans residues 356 to 414; the sequence is LQLLREMRQALQALLKENRLLQEENRTLQVLRAEHRGFQEENKALWENNKLKLQQKLVI.

The protein belongs to the chibby family. SPERT subfamily. As to quaternary structure, homodimer. Binds to NEK1.

This chain is Protein chibby homolog 2 (CBY2), found in Macaca fascicularis (Crab-eating macaque).